We begin with the raw amino-acid sequence, 558 residues long: Acylase ACY 1 proenzyme (558 aa).

T368 serves as the catalytic Nucleophile.

Belongs to the gamma-glutamyltransferase family. As to quaternary structure, dimer of two non-identical chains processed from the same precursor.

It catalyses the reaction (7R)-7-(4-carboxybutanamido)cephalosporanate + H2O = (7R)-7-aminocephalosporanate + glutarate. The enzyme catalyses an N-terminal (5-L-glutamyl)-[peptide] + an alpha-amino acid = 5-L-glutamyl amino acid + an N-terminal L-alpha-aminoacyl-[peptide]. It carries out the reaction glutathione + H2O = L-cysteinylglycine + L-glutamate. The catalysed reaction is an S-substituted glutathione + H2O = an S-substituted L-cysteinylglycine + L-glutamate. In terms of biological role, besides the cephalosporin acylase I activity which converts GL-7ACA into 7-ACA; this enzyme displays some gamma glutamyltranspeptidase activity. The protein is Acylase ACY 1 proenzyme (acyI) of Pseudomonas sp. (strain V22).